The following is a 172-amino-acid chain: Adenine phosphoribosyltransferase (172 aa).

It belongs to the purine/pyrimidine phosphoribosyltransferase family. In terms of assembly, homodimer.

It localises to the cytoplasm. The enzyme catalyses AMP + diphosphate = 5-phospho-alpha-D-ribose 1-diphosphate + adenine. Its pathway is purine metabolism; AMP biosynthesis via salvage pathway; AMP from adenine: step 1/1. Functionally, catalyzes a salvage reaction resulting in the formation of AMP, that is energically less costly than de novo synthesis. The chain is Adenine phosphoribosyltransferase from Clostridium botulinum (strain ATCC 19397 / Type A).